A 520-amino-acid polypeptide reads, in one-letter code: Ubiquitin carboxyl-terminal hydrolase 3 (520 aa).

Met-1 is modified (N-acetylmethionine). A UBP-type zinc finger spans residues 1 to 121 (MECPHLSSSV…QKVREHLQNL (121 aa)). Zn(2+)-binding residues include Cys-3, His-5, Cys-29, Cys-32, Cys-41, Cys-44, Cys-49, His-56, His-60, His-82, Cys-95, and Cys-98. In terms of domain architecture, USP spans 159 to 511 (TGLRNLGNTC…KAYILFYVER (353 aa)). The active-site Nucleophile is the Cys-168. His-471 serves as the catalytic Proton acceptor.

It belongs to the peptidase C19 family. USP3 subfamily. In terms of assembly, interacts (via UBP-type domain) with H2A; the interaction is less efficient than with monoubiquitinated H2A.

It localises to the nucleus. The protein resides in the cytoplasm. It carries out the reaction Thiol-dependent hydrolysis of ester, thioester, amide, peptide and isopeptide bonds formed by the C-terminal Gly of ubiquitin (a 76-residue protein attached to proteins as an intracellular targeting signal).. Functionally, deubiquitinase that plays a role in several cellular processes including transcriptional regulation, cell cycle progression or innate immunity. In response to DNA damage, deubiquitinates monoubiquitinated target proteins such as histone H2A and H2AX and thereby counteracts RNF168- and RNF8-mediated ubiquitination. In turn, participates in the recruitment of DNA damage repair factors to DNA break sites. Required for proper progression through S phase and subsequent mitotic entry. Acts as a positive regulator of TP53 by deubiquitinating and stabilizing it to promote normal cell proliferation and transformation. Participates in establishing tolerance innate immune memory through non-transcriptional feedback. Mechanistically, negatively regulates TLR-induced NF-kappa-B signaling by targeting and removing the 'Lys-63'-linked polyubiquitin chains on MYD88. Negatively regulates the activation of type I interferon signaling by mediating 'Lys-63'-linked polyubiquitin chains on RIGI and IFIH1. Also deubiquinates ASC/PYCARD, the central adapter mediating the assembly and activation of most inflammasomes, and thereby promotes inflammasome activation. This is Ubiquitin carboxyl-terminal hydrolase 3 (Usp3) from Mus musculus (Mouse).